The chain runs to 423 residues: Kynureninase (423 aa).

Pyridoxal 5'-phosphate-binding positions include Leu105, Ser106, 133 to 136 (FPSD), Asp218, His221, and Tyr243. Residue Lys244 is modified to N6-(pyridoxal phosphate)lysine. Trp273 and Asn301 together coordinate pyridoxal 5'-phosphate.

It belongs to the kynureninase family. In terms of assembly, homodimer. The cofactor is pyridoxal 5'-phosphate.

The catalysed reaction is L-kynurenine + H2O = anthranilate + L-alanine + H(+). The enzyme catalyses 3-hydroxy-L-kynurenine + H2O = 3-hydroxyanthranilate + L-alanine + H(+). Its pathway is amino-acid degradation; L-kynurenine degradation; L-alanine and anthranilate from L-kynurenine: step 1/1. It functions in the pathway cofactor biosynthesis; NAD(+) biosynthesis; quinolinate from L-kynurenine: step 2/3. Its function is as follows. Catalyzes the cleavage of L-kynurenine (L-Kyn) and L-3-hydroxykynurenine (L-3OHKyn) into anthranilic acid (AA) and 3-hydroxyanthranilic acid (3-OHAA), respectively. The polypeptide is Kynureninase (Xanthomonas oryzae pv. oryzae (strain PXO99A)).